A 411-amino-acid polypeptide reads, in one-letter code: ATP-dependent RNA helicase eIF4A (411 aa).

Residues 1–23 (MSKPEDTSAAAAAPAGEAGNNLN) form a disordered region. The segment covering 9-19 (AAAAAPAGEAG) has biased composition (low complexity). The Q motif signature appears at 38–66 (DNFDNMELKEELLRGVYAYGFERPSAIQA). One can recognise a Helicase ATP-binding domain in the interval 69-239 (IVPVIKGHDV…KKFMRDPIRI (171 aa)). 82–89 (AQSGTGKT) is an ATP binding site. The DEAD box motif lies at 187 to 190 (DEAD). The region spanning 250-411 (GIKQFYVAVE…EMPLNVADLI (162 aa)) is the Helicase C-terminal domain.

The protein belongs to the DEAD box helicase family. eIF4A subfamily. As to quaternary structure, component of the eIF4F complex, which composition varies with external and internal environmental conditions. It is composed of at least eIF4A, eIF4E and eIF4G.

Its subcellular location is the cytoplasm. The enzyme catalyses ATP + H2O = ADP + phosphate + H(+). Its function is as follows. ATP-dependent RNA helicase which is a subunit of the eIF4F complex involved in cap recognition and is required for mRNA binding to ribosome. In the current model of translation initiation, eIF4A unwinds RNA secondary structures in the 5'-UTR of mRNAs which is necessary to allow efficient binding of the small ribosomal subunit, and subsequent scanning for the initiator codon. In Mycosarcoma maydis (Corn smut fungus), this protein is ATP-dependent RNA helicase eIF4A (TIF1).